The primary structure comprises 122 residues: Large ribosomal subunit protein uL18 (122 aa).

The protein belongs to the universal ribosomal protein uL18 family. As to quaternary structure, part of the 50S ribosomal subunit; part of the 5S rRNA/L5/L18/L25 subcomplex. Contacts the 5S and 23S rRNAs.

Its function is as follows. This is one of the proteins that bind and probably mediate the attachment of the 5S RNA into the large ribosomal subunit, where it forms part of the central protuberance. This is Large ribosomal subunit protein uL18 from Lachnoclostridium phytofermentans (strain ATCC 700394 / DSM 18823 / ISDg) (Clostridium phytofermentans).